Here is a 195-residue protein sequence, read N- to C-terminus: Calcineurin B homologous protein 1 (195 aa).

The N-myristoyl glycine moiety is linked to residue Gly2. Positions 2-6 (GSRAS) match the Necessary for association with microtubule and interaction with GAPDH motif. 4 EF-hand domains span residues 26–61 (SQIT…AINP), 66–101 (IINA…KSKD), 110–145 (SRSN…MVGV), and 151–186 (QLGS…VDVE). Residues Asp123, Asp125, Asp127, Lys129, and Glu134 each coordinate Ca(2+). The Nuclear export signal 1 motif lies at 138–147 (VLRMMVGVNI). The necessary for nuclear export signal stretch occupies residues 143 to 185 (VGVNISDEQLGSIADRTIQEADQDGDSAISFTEFVKVLEKVDV). Asp164, Asp166, Asp168, and Glu175 together coordinate Ca(2+). Residues 176-185 (FVKVLEKVDV) carry the Nuclear export signal 2 motif.

The protein belongs to the calcineurin regulatory subunit family. CHP subfamily. In terms of assembly, monomer. Interacts with STK17B; the interaction occurs in a calcium-independent manner and induces the translocation of CHP1 from the Golgi to the nucleus. Interacts with GAPDH; the interaction is direct, occurs in a N-myristoylation-dependent manner and facilitates the ability of CHP1 to bind microtubules. Interacts with KIF1B (via the C-terminal end of the kinesin-motor domain); the interaction occurs in a calcium-dependent manner. Associates (via C-terminal domain) with microtubules; the association occurs with polymerized microtubules during the cell cycle in a myristoylation- and calcium-independent manner and is enhanced by GAPDH. Interacts with PPP3CA. Interacts with SLC9A1/NHE1 (via the C-terminal domain); the interaction occurs at the plasma membrane in a calcium-dependent manner and at a domain that is critical for growth factor stimulation of the exchanger. Interacts with SLC9A3; increases SLC9A3 trafficking and activity at the plasma membrane. Post-translationally, phosphorylated; decreased phosphorylation is associated with an increase in SLC9A1/NHE1 Na(+)/H(+) exchange activity. Phosphorylation occurs in serum-dependent manner. The phosphorylation state may regulate the binding to SLC9A1/NHE1. In terms of processing, both N-myristoylation and calcium-mediated conformational changes are essential for its function in exocytic traffic. N-myristoylation is required for its association with microtubules and interaction with GAPDH, but not for the constitutive association to membranes. In terms of tissue distribution, ubiquitously expressed. Has been found in fetal eye, lung, liver, muscle, heart, kidney, thymus and spleen.

Its subcellular location is the nucleus. It localises to the cytoplasm. The protein resides in the cytoskeleton. It is found in the endomembrane system. The protein localises to the endoplasmic reticulum-Golgi intermediate compartment. Its subcellular location is the endoplasmic reticulum. It localises to the cell membrane. The protein resides in the membrane. Calcium-binding protein involved in different processes such as regulation of vesicular trafficking, plasma membrane Na(+)/H(+) exchanger and gene transcription. Involved in the constitutive exocytic membrane traffic. Mediates the association between microtubules and membrane-bound organelles of the endoplasmic reticulum and Golgi apparatus and is also required for the targeting and fusion of transcytotic vesicles (TCV) with the plasma membrane. Functions as an integral cofactor in cell pH regulation by controlling plasma membrane-type Na(+)/H(+) exchange activity. Affects the pH sensitivity of SLC9A1/NHE1 by increasing its sensitivity at acidic pH. Required for the stabilization and localization of SLC9A1/NHE1 at the plasma membrane. Inhibits serum- and GTPase-stimulated Na(+)/H(+) exchange. Plays a role as an inhibitor of ribosomal RNA transcription by repressing the nucleolar UBF1 transcriptional activity. May sequester UBF1 in the nucleoplasm and limit its translocation to the nucleolus. Associates to the ribosomal gene promoter. Acts as a negative regulator of the calcineurin/NFAT signaling pathway. Inhibits NFAT nuclear translocation and transcriptional activity by suppressing the calcium-dependent calcineurin phosphatase activity. Also negatively regulates the kinase activity of the apoptosis-induced kinase STK17B. Inhibits both STK17B auto- and substrate-phosphorylations in a calcium-dependent manner. This chain is Calcineurin B homologous protein 1 (CHP1), found in Homo sapiens (Human).